Here is a 387-residue protein sequence, read N- to C-terminus: UPF0400 protein C337.03 (387 aa).

The region spanning Met1 to Glu133 is the CID domain. The stretch at Lys177–Ser255 forms a coiled coil. A disordered region spans residues Thr257–Ser387. Residues Ser283–Pro297 show a composition bias toward low complexity. Polar residues predominate over residues Gln298–Asn323. Residues Asn353–Asp365 are compositionally biased toward acidic residues. Low complexity predominate over residues Asp370–Ser379. At Ser372 the chain carries Phosphoserine.

The protein belongs to the UPF0400 (RTT103) family.

The protein is UPF0400 protein C337.03 of Schizosaccharomyces pombe (strain 972 / ATCC 24843) (Fission yeast).